Reading from the N-terminus, the 103-residue chain is Histone H4.2 (103 aa).

The span at 1–14 shows a compositional bias: gly residues; the sequence is MTGRGKGGKGLGKG. The interval 1–20 is disordered; that stretch reads MTGRGKGGKGLGKGGAKRHR. Lys-6 carries the N6-acetyl-N6-methyllysine; alternate modification. Lys-6, Lys-9, and Lys-13 each carry N6-methyllysine; alternate. The residue at position 13 (Lys-13) is an N6-acetyl-N6-methyllysine; alternate. Residues 17-21 mediate DNA binding; sequence KRHRK. Lys-92 carries the post-translational modification N6-glutaryllysine.

It belongs to the histone H4 family. As to quaternary structure, the nucleosome is a histone octamer containing two molecules each of H2A, H2B, H3 and H4 assembled in one H3-H4 heterotetramer and two H2A-H2B heterodimers. The octamer wraps approximately 147 bp of DNA. In terms of processing, glutarylation at Lys-92 (H4K91glu) destabilizes nucleosomes by promoting dissociation of the H2A-H2B dimers from nucleosomes.

It localises to the nucleus. It is found in the chromosome. In terms of biological role, core component of nucleosome. Nucleosomes wrap and compact DNA into chromatin, limiting DNA accessibility to the cellular machineries which require DNA as a template. Histones thereby play a central role in transcription regulation, DNA repair, DNA replication and chromosomal stability. DNA accessibility is regulated via a complex set of post-translational modifications of histones, also called histone code, and nucleosome remodeling. This chain is Histone H4.2 (H4.2), found in Talaromyces funiculosus (Fruitlet core rot fungus).